We begin with the raw amino-acid sequence, 155 residues long: NADPH-dependent 7-cyano-7-deazaguanine reductase (155 aa).

C53 (thioimide intermediate) is an active-site residue. D60 functions as the Proton donor in the catalytic mechanism. Residues 75 to 77 (VES) and 94 to 95 (HE) contribute to the substrate site.

Belongs to the GTP cyclohydrolase I family. QueF type 1 subfamily.

The protein resides in the cytoplasm. It catalyses the reaction 7-aminomethyl-7-carbaguanine + 2 NADP(+) = 7-cyano-7-deazaguanine + 2 NADPH + 3 H(+). It participates in tRNA modification; tRNA-queuosine biosynthesis. In terms of biological role, catalyzes the NADPH-dependent reduction of 7-cyano-7-deazaguanine (preQ0) to 7-aminomethyl-7-deazaguanine (preQ1). This chain is NADPH-dependent 7-cyano-7-deazaguanine reductase, found in Ruegeria pomeroyi (strain ATCC 700808 / DSM 15171 / DSS-3) (Silicibacter pomeroyi).